We begin with the raw amino-acid sequence, 79 residues long: Cell division protein ZapB (79 aa).

Residues 4–78 (EVFEKLEAKV…LRALLGKMEE (75 aa)) adopt a coiled-coil conformation.

Belongs to the ZapB family. As to quaternary structure, homodimer. The ends of the coiled-coil dimer bind to each other, forming polymers. Interacts with FtsZ.

It is found in the cytoplasm. In terms of biological role, non-essential, abundant cell division factor that is required for proper Z-ring formation. It is recruited early to the divisome by direct interaction with FtsZ, stimulating Z-ring assembly and thereby promoting cell division earlier in the cell cycle. Its recruitment to the Z-ring requires functional FtsA or ZipA. The protein is Cell division protein ZapB of Erwinia tasmaniensis (strain DSM 17950 / CFBP 7177 / CIP 109463 / NCPPB 4357 / Et1/99).